We begin with the raw amino-acid sequence, 603 residues long: Serine/threonine-protein kinase PLK1 (603 aa).

A Glycyl lysine isopeptide (Lys-Gly) (interchain with G-Cter in ubiquitin) cross-link involves residue K19. One can recognise a Protein kinase domain in the interval 53 to 305; sequence YVRGRFLGKG…IHELLNDEFF (253 aa). ATP contacts are provided by residues 59 to 67 and K82; that span reads LGKGGFAKC. S103 is subject to Phosphoserine. Position 131 (E131) interacts with ATP. A Phosphoserine modification is found at S137. Catalysis depends on D176, which acts as the Proton acceptor. Residues 178-181 and D194 contribute to the ATP site; that span reads KLGN. The activation loop stretch occupies residues 194-221; the sequence is DFGLATKVEYEGERKKTLCGTPNYIAPE. T210 bears the Phosphothreonine; by AURKA mark. T214 is modified (phosphothreonine). Phosphoserine; by autocatalysis is present on residues S269 and S335. The short motif at 337-340 is the D-box that targets the protein for proteasomal degradation in anaphase element; sequence RKPL. K338 is covalently cross-linked (Glycyl lysine isopeptide (Lys-Gly) (interchain with G-Cter in SUMO2)). A phosphoserine mark is found at S375 and S450. In terms of domain architecture, POLO box 1 spans 410-488; that stretch reads WVSKWVDYSD…LNYFRNYMSE (79 aa). K492 is covalently cross-linked (Glycyl lysine isopeptide (Lys-Gly) (interchain with G-Cter in ubiquitin)). The linker stretch occupies residues 493 to 507; the sequence is AGANITPREGDELAR. Position 498 is a phosphothreonine (T498). A POLO box 2 domain is found at 510–592; the sequence is YLRTWFRTRS…ARTMVDKLLS (83 aa). The tract at residues 538-540 is important for interaction with phosphorylated proteins; it reads HTK.

This sequence belongs to the protein kinase superfamily. Ser/Thr protein kinase family. CDC5/Polo subfamily. In terms of assembly, interacts with CEP170 and EVI5. Interacts and phosphorylates ERCC6L. Interacts with FAM29A. Interacts with SLX4/BTBD12 and TTDN1. Interacts with BUB1B. Interacts (via POLO-box domain) with the phosphorylated form of BUB1, CENPU and CDC25C. Interacts with isoform 3 of SGO1. Interacts with BORA, KIF2A and AURKA. Interacts with TOPORS and CYLD. Interacts with ECT2; the interaction is stimulated upon phosphorylation of ECT2 on 'Thr-444'. Interacts with PRC1. Interacts with KIF20A/MKLP2 (when phosphorylated), leading to the recruitment at the central spindle. Interacts (via POLO box domains) with PPP1R12A/MYPT1 (when previously phosphorylated by CDK1). Part of an astrin (SPAG5)-kinastrin (SKAP) complex containing KNSTRN, SPAG5, PLK1, DYNLL1 and SGO2A. Interacts with BIRC6/bruce. Interacts with CDK1-phosphorylated DCTN6 during mitotic prometaphase; the interaction facilitates recruitment to kinetochores. Interacts with CDK1-phosphorylated FRY; this interaction occurs in mitotic cells, but not in interphase cells. FRY interaction facilitates AURKA-mediated PLK1 phosphorylation. Interacts with CEP68; the interaction phosphorylates CEP68. Interacts (via POLO-box domain) with DCTN1. Interacts with CEP20 in later G1, S, G2 and M phases of the cell cycle; this interaction recruits PLK1 to centrosomes, a step required for S phase progression. Interacts with HSF1; this interaction increases upon heat shock but does not modulate neither HSF1 homotrimerization nor DNA-binding activities. Interacts with HNRNPU; this interaction induces phosphorylation of HNRNPU in mitosis. Interacts (via its N-terminus) with RIOK2. Interacts with KLHL22. Interacts (via POLO box domains) with NEDD9/HEF1 (via C-terminus). Interacts (via RVxF motif) with FIRRM; regulates PLK1 kinase activity. Interacts with SKA3; the interaction promotes the stability of PLK1. Interacts with the MTMR3:MTMR4 heterooligomer; brings CEP55 and PLK1 together during early mitosis, regulating the phosphorylation of CEP55 by PLK1 and its recruitment to the midbody where it can mediate cell abscission. In terms of processing, catalytic activity is enhanced by phosphorylation of Thr-210. Phosphorylation at Thr-210 is first detected on centrosomes in the G2 phase of the cell cycle, peaks in prometaphase and gradually disappears from centrosomes during anaphase. Dephosphorylation at Thr-210 at centrosomes is probably mediated by protein phosphatase 1C (PP1C), via interaction with PPP1R12A/MYPT1. Autophosphorylation and phosphorylation of Ser-137 may not be significant for the activation of PLK1 during mitosis, but may enhance catalytic activity during recovery after DNA damage checkpoint. Phosphorylated in vitro by STK10. Ubiquitinated by the anaphase promoting complex/cyclosome (APC/C) in anaphase and following DNA damage, leading to its degradation by the proteasome. Ubiquitination is mediated via its interaction with FZR1/CDH1. Ubiquitination and subsequent degradation prevents entry into mitosis and is essential to maintain an efficient G2 DNA damage checkpoint. Monoubiquitination at Lys-492 by the BCR(KLHL22) ubiquitin ligase complex does not lead to degradation: it promotes PLK1 dissociation from phosphoreceptor proteins and subsequent removal from kinetochores, allowing silencing of the spindle assembly checkpoint (SAC) and chromosome segregation. Newborn and adult spleen, fetal and newborn kidney, liver, brain, thymus and adult bone marrow, thymus, ovary and testes.

The protein resides in the nucleus. It localises to the chromosome. Its subcellular location is the centromere. The protein localises to the kinetochore. It is found in the cytoplasm. The protein resides in the cytoskeleton. It localises to the microtubule organizing center. Its subcellular location is the centrosome. The protein localises to the spindle. It is found in the midbody. It carries out the reaction L-seryl-[protein] + ATP = O-phospho-L-seryl-[protein] + ADP + H(+). The catalysed reaction is L-threonyl-[protein] + ATP = O-phospho-L-threonyl-[protein] + ADP + H(+). With respect to regulation, activated by phosphorylation of Thr-210 by AURKA; phosphorylation by AURKA is enhanced by BORA. Once activated, activity is stimulated by binding target proteins. Binding of target proteins has no effect on the non-activated kinase. Several inhibitors targeting PLKs are currently in development and are under investigation in a growing number of clinical trials, such as BI 2536, an ATP-competitive PLK1 inhibitor or BI 6727, a dihydropteridinone that specifically inhibits the catalytic activity of PLK1. In terms of biological role, serine/threonine-protein kinase that performs several important functions throughout M phase of the cell cycle, including the regulation of centrosome maturation and spindle assembly, the removal of cohesins from chromosome arms, the inactivation of anaphase-promoting complex/cyclosome (APC/C) inhibitors, and the regulation of mitotic exit and cytokinesis. Polo-like kinase proteins act by binding and phosphorylating proteins that are already phosphorylated on a specific motif recognized by the POLO box domains. Phosphorylates BORA, BUB1B/BUBR1, CCNB1, CDC25C, CEP55, ECT2, ERCC6L, FBXO5/EMI1, FOXM1, KIF20A/MKLP2, CENPU, NEDD1, NINL, NPM1, NUDC, PKMYT1/MYT1, KIZ, MRE11, PPP1R12A/MYPT1, POLQ, PRC1, RACGAP1/CYK4, RAD51, RHNO1, SGO1, STAG2/SA2, TEX14, TOPORS, p73/TP73, TPT1, WEE1 and HNRNPU. Plays a key role in centrosome functions and the assembly of bipolar spindles by phosphorylating KIZ, NEDD1 and NINL. NEDD1 phosphorylation promotes subsequent targeting of the gamma-tubulin ring complex (gTuRC) to the centrosome, an important step for spindle formation. Phosphorylation of NINL component of the centrosome leads to NINL dissociation from other centrosomal proteins. Involved in mitosis exit and cytokinesis by phosphorylating CEP55, ECT2, KIF20A/MKLP2, CENPU, PRC1 and RACGAP1. Recruited at the central spindle by phosphorylating and docking PRC1 and KIF20A/MKLP2; creates its own docking sites on PRC1 and KIF20A/MKLP2 by mediating phosphorylation of sites subsequently recognized by the POLO box domains. Phosphorylates RACGAP1, thereby creating a docking site for the Rho GTP exchange factor ECT2 that is essential for the cleavage furrow formation. Promotes the central spindle recruitment of ECT2. Plays a central role in G2/M transition of mitotic cell cycle by phosphorylating CCNB1, CDC25C, FOXM1, CENPU, PKMYT1/MYT1, PPP1R12A/MYPT1 and WEE1. Part of a regulatory circuit that promotes the activation of CDK1 by phosphorylating the positive regulator CDC25C and inhibiting the negative regulators WEE1 and PKMYT1/MYT1. Also acts by mediating phosphorylation of cyclin-B1 (CCNB1) on centrosomes in prophase. Phosphorylates FOXM1, a key mitotic transcription regulator, leading to enhance FOXM1 transcriptional activity. Involved in kinetochore functions and sister chromatid cohesion by phosphorylating BUB1B/BUBR1, FBXO5/EMI1 and STAG2/SA2. PLK1 is high on non-attached kinetochores suggesting a role of PLK1 in kinetochore attachment or in spindle assembly checkpoint (SAC) regulation. Required for kinetochore localization of BUB1B. Regulates the dissociation of cohesin from chromosomes by phosphorylating cohesin subunits such as STAG2/SA2. Phosphorylates SGO1: required for spindle pole localization of isoform 3 of SGO1 and plays a role in regulating its centriole cohesion function. Mediates phosphorylation of FBXO5/EMI1, a negative regulator of the APC/C complex during prophase, leading to FBXO5/EMI1 ubiquitination and degradation by the proteasome. Acts as a negative regulator of p53 family members: phosphorylates TOPORS, leading to inhibit the sumoylation of p53/TP53 and simultaneously enhance the ubiquitination and subsequent degradation of p53/TP53. Phosphorylates the transactivation domain of the transcription factor p73/TP73, leading to inhibit p73/TP73-mediated transcriptional activation and pro-apoptotic functions. Phosphorylates BORA, and thereby promotes the degradation of BORA. Contributes to the regulation of AURKA function. Also required for recovery after DNA damage checkpoint and entry into mitosis. Phosphorylates MISP, leading to stabilization of cortical and astral microtubule attachments required for proper spindle positioning. Together with MEIKIN, acts as a regulator of kinetochore function during meiosis I: required both for mono-orientation of kinetochores on sister chromosomes and protection of centromeric cohesin from separase-mediated cleavage. Phosphorylates CEP68 and is required for its degradation. Regulates nuclear envelope breakdown during prophase by phosphorylating DCTN1 resulting in its localization in the nuclear envelope. Phosphorylates the heat shock transcription factor HSF1, promoting HSF1 nuclear translocation upon heat shock. Phosphorylates HSF1 also in the early mitotic period; this phosphorylation regulates HSF1 localization to the spindle pole, the recruitment of the SCF(BTRC) ubiquitin ligase complex induicing HSF1 degradation, and hence mitotic progression. Regulates mitotic progression by phosphorylating RIOK2. Through the phosphorylation of DZIP1 regulates the localization during mitosis of the BBSome, a ciliary protein complex involved in cilium biogenesis. Regulates DNA repair during mitosis by mediating phosphorylation of POLQ and RHNO1, thereby promoting POLQ recruitment to DNA damage sites. Phosphorylates ATXN10 which may play a role in the regulation of cytokinesis and may stimulate the proteasome-mediated degradation of ATXN10. This Mus musculus (Mouse) protein is Serine/threonine-protein kinase PLK1 (Plk1).